Consider the following 295-residue polypeptide: Iron-sulfur cluster carrier protein (295 aa).

Position 38-45 (38-45 (GKGGVGKS)) interacts with ATP.

It belongs to the Mrp/NBP35 ATP-binding proteins family. Homodimer.

Binds and transfers iron-sulfur (Fe-S) clusters to target apoproteins. Can hydrolyze ATP. The polypeptide is Iron-sulfur cluster carrier protein (Pyrococcus abyssi (strain GE5 / Orsay)).